The chain runs to 499 residues: Serine carboxypeptidase-like 34 (499 aa).

The signal sequence occupies residues Met-1–Ala-25. Residues Asn-73, Asn-124, and Asn-158 are each glycosylated (N-linked (GlcNAc...) asparagine). 3 disulfide bridges follow: Cys-106/Cys-383, Cys-269/Cys-280, and Cys-304/Cys-351. Residue Ser-200 is part of the active site. N-linked (GlcNAc...) asparagine glycosylation is found at Asn-310, Asn-372, and Asn-375. Catalysis depends on residues Asp-419 and His-471.

The protein belongs to the peptidase S10 family. Ubiquitous.

The protein resides in the secreted. In terms of biological role, probable carboxypeptidase. The sequence is that of Serine carboxypeptidase-like 34 (SCPL34) from Arabidopsis thaliana (Mouse-ear cress).